Consider the following 101-residue polypeptide: MAKQSMKAREVKRVALAEKYFAKRAELKAIISDVNASDEDRWNAVLKLQTLPRDSSPSRQRNRCRQTGRPHAFLRKFGLSRIKVREAAMRGEIPGLKKASW.

Belongs to the universal ribosomal protein uS14 family. As to quaternary structure, part of the 30S ribosomal subunit. Contacts proteins S3 and S10.

In terms of biological role, binds 16S rRNA, required for the assembly of 30S particles and may also be responsible for determining the conformation of the 16S rRNA at the A site. The protein is Small ribosomal subunit protein uS14 of Cronobacter sakazakii (strain ATCC BAA-894) (Enterobacter sakazakii).